We begin with the raw amino-acid sequence, 396 residues long: Phosphoglycerate kinase (396 aa).

Substrate is bound by residues 20–22, arginine 35, 58–61, arginine 115, and arginine 155; these read DIN and HQGR. ATP contacts are provided by residues glutamate 328 and 353-356; that span reads GGDT.

Belongs to the phosphoglycerate kinase family. As to quaternary structure, monomer.

It localises to the cytoplasm. The catalysed reaction is (2R)-3-phosphoglycerate + ATP = (2R)-3-phospho-glyceroyl phosphate + ADP. It participates in carbohydrate degradation; glycolysis; pyruvate from D-glyceraldehyde 3-phosphate: step 2/5. The sequence is that of Phosphoglycerate kinase from Natronomonas pharaonis (strain ATCC 35678 / DSM 2160 / CIP 103997 / JCM 8858 / NBRC 14720 / NCIMB 2260 / Gabara) (Halobacterium pharaonis).